The following is a 64-amino-acid chain: Large ribosomal subunit protein bL33 (64 aa).

The protein belongs to the bacterial ribosomal protein bL33 family.

The chain is Large ribosomal subunit protein bL33 from Nostoc punctiforme (strain ATCC 29133 / PCC 73102).